Consider the following 296-residue polypeptide: Probable AP endonuclease (296 aa).

Cysteines 16 and 20 form a disulfide. Zn(2+) contacts are provided by histidine 78, histidine 115, glutamate 142, histidine 182, histidine 218, aspartate 231, histidine 233, and glutamate 271.

The protein belongs to the AP endonuclease 2 family. It depends on Zn(2+) as a cofactor.

It is found in the host nucleus. Its subcellular location is the host cytoplasm. It localises to the virion. In terms of biological role, endonuclease that plays a role in DNA repair. Cleaves phosphodiester bonds on the 5' side of apurinic or apyrimidinic sites (AP sites). In addition to endonuclease activity, the ASFV enzyme has a proofreading 3'-5' exonuclease activity that is considerably more efficient in the elimination of a mismatch than in that of a correctly paired base. Displays 3'-phosphatase and 3'-repair diesterase activities. The single nucleotide gaps generated by the AP endonuclease are filled by the viral AP endonuclease and DNA ligase. The protein is Probable AP endonuclease of Ornithodoros (relapsing fever ticks).